The following is a 90-amino-acid chain: Probable Fe(2+)-trafficking protein (90 aa).

Belongs to the Fe(2+)-trafficking protein family.

In terms of biological role, could be a mediator in iron transactions between iron acquisition and iron-requiring processes, such as synthesis and/or repair of Fe-S clusters in biosynthetic enzymes. This Leptothrix cholodnii (strain ATCC 51168 / LMG 8142 / SP-6) (Leptothrix discophora (strain SP-6)) protein is Probable Fe(2+)-trafficking protein.